A 491-amino-acid chain; its full sequence is Ketol-acid reductoisomerase (NADP(+)) (491 aa).

Residues 15–208 (AQLGKCRFMG…GGHRAGVLES (194 aa)) form the KARI N-terminal Rossmann domain. NADP(+) is bound by residues 45–48 (CGAQ), Arg-68, Arg-76, Ser-78, and 108–110 (DKQ). The active site involves His-132. NADP(+) is bound at residue Gly-158. 2 consecutive KARI C-terminal knotted domains span residues 209–344 (SFVA…TAPQ) and 345–484 (FEGK…MTDM). Mg(2+) is bound by residues Asp-217, Glu-221, Glu-389, and Glu-393. A substrate-binding site is contributed by Ser-414.

Belongs to the ketol-acid reductoisomerase family. The cofactor is Mg(2+).

It catalyses the reaction (2R)-2,3-dihydroxy-3-methylbutanoate + NADP(+) = (2S)-2-acetolactate + NADPH + H(+). The enzyme catalyses (2R,3R)-2,3-dihydroxy-3-methylpentanoate + NADP(+) = (S)-2-ethyl-2-hydroxy-3-oxobutanoate + NADPH + H(+). It participates in amino-acid biosynthesis; L-isoleucine biosynthesis; L-isoleucine from 2-oxobutanoate: step 2/4. The protein operates within amino-acid biosynthesis; L-valine biosynthesis; L-valine from pyruvate: step 2/4. Its function is as follows. Involved in the biosynthesis of branched-chain amino acids (BCAA). Catalyzes an alkyl-migration followed by a ketol-acid reduction of (S)-2-acetolactate (S2AL) to yield (R)-2,3-dihydroxy-isovalerate. In the isomerase reaction, S2AL is rearranged via a Mg-dependent methyl migration to produce 3-hydroxy-3-methyl-2-ketobutyrate (HMKB). In the reductase reaction, this 2-ketoacid undergoes a metal-dependent reduction by NADPH to yield (R)-2,3-dihydroxy-isovalerate. The protein is Ketol-acid reductoisomerase (NADP(+)) of Salmonella choleraesuis (strain SC-B67).